A 185-amino-acid polypeptide reads, in one-letter code: Thioredoxin F2, chloroplastic (185 aa).

Residues 59 to 184 (RRIGSCVVRC…LLAAIEAARS (126 aa)) enclose the Thioredoxin domain. Active-site nucleophile residues include C109 and C112. Residues C109 and C112 are joined by a disulfide bond. C136 is modified (S-glutathionyl cysteine; transient).

This sequence belongs to the thioredoxin family. Plant F-type subfamily. In terms of processing, glutathionylation at Cys-136 decreases its ability to be reduced by ferredoxin-thioredoxin reductase and reduces its efficiency in activating target chloroplastic enzymes.

It is found in the plastid. It localises to the chloroplast stroma. Probable thiol-disulfide oxidoreductase involved in the redox regulation of enzymes of both reductive pentose phosphate pathway (Calvin-Benson cycle) and oxidative pentose phosphate pathway. The protein is Thioredoxin F2, chloroplastic of Arabidopsis thaliana (Mouse-ear cress).